Here is a 489-residue protein sequence, read N- to C-terminus: Serine/threonine-protein kinase dyf-5 (489 aa).

The region spanning 11 to 291 (YLMTKRLGDG…ANQSLRYKYF (281 aa)) is the Protein kinase domain. ATP-binding positions include 17–25 (LGDGTFGEV) and lysine 40. Catalysis depends on aspartate 132, which acts as the Proton acceptor. Disordered regions lie at residues 366–385 (EKSD…KPTA) and 452–489 (QTGP…KYVK). The span at 458–473 (SNQTNNHSANNSHSPN) shows a compositional bias: low complexity.

The protein belongs to the protein kinase superfamily. CMGC Ser/Thr protein kinase family. RCK subfamily. It depends on Mg(2+) as a cofactor. Expressed in head neurons including amphid and labial sensory neurons and 3 pairs of neurons in the tail including phasmid sensory neurons. In male, expressed in the tail including the sensory rays and the spicule.

The protein resides in the perikaryon. It localises to the cell projection. The protein localises to the dendrite. It is found in the axon. Its subcellular location is the cilium. It catalyses the reaction L-seryl-[protein] + ATP = O-phospho-L-seryl-[protein] + ADP + H(+). The catalysed reaction is L-threonyl-[protein] + ATP = O-phospho-L-threonyl-[protein] + ADP + H(+). In terms of biological role, serine/threonine-protein kinase which is required for ciliogenesis. Regulates the length and the morphology of sensory neuron cilia. In addition, plays a role in the anterograde intraflagellar transport (IFT) in the cilia by regulating the undocking of kinesin-II motor complex (composed of klp-11, klp-20 and kap-1) before reaching the distal segment and the docking of kinesin motor osm-3 onto IFT cargos. The chain is Serine/threonine-protein kinase dyf-5 from Caenorhabditis elegans.